The sequence spans 856 residues: Serine/threonine-protein phosphatase 6 regulatory subunit 1 (856 aa).

An interaction with PPP6C region spans residues S10 to V403. At S232 the chain carries Phosphoserine. T524 is subject to Phosphothreonine. Phosphoserine occurs at positions 529, 530, and 531. Residues D621–G630 are compositionally biased toward acidic residues. 2 disordered regions span residues D621 to E770 and R792 to Q856. A phosphoserine mark is found at S633 and S636. Residues Q644–Q656 show a composition bias toward polar residues. Residues D667–A683 are compositionally biased toward acidic residues. 2 positions are modified to phosphoserine: S698 and S739. Residues A794 to V809 show a composition bias toward polar residues. S826 carries the post-translational modification Phosphoserine. A compositionally biased stretch (low complexity) spans P842–Q856.

Belongs to the SAPS family. In terms of assembly, protein phosphatase 6 (PP6) holoenzyme is proposed to be a heterotrimeric complex formed of the catalytic subunit, a SAPS domain-containing subunit (PP6R) and an ankyrin repeat-domain containing regulatory subunit (ARS). Interacts with PPP6C and NFKBIE. Interacts with ANKRD28, ANKRD44 and ANKRD52. As to expression, ubiquitous with highest expression in lung, spleen and bladder.

The protein localises to the cytoplasm. Regulatory subunit of protein phosphatase 6 (PP6). May function as a scaffolding PP6 subunit. Involved in the PP6-mediated dephosphorylation of NFKBIE opposing its degradation in response to TNF-alpha. The polypeptide is Serine/threonine-protein phosphatase 6 regulatory subunit 1 (Ppp6r1) (Mus musculus (Mouse)).